We begin with the raw amino-acid sequence, 524 residues long: Cytochrome P450 CYP749A22 (524 aa).

A helical membrane pass occupies residues 12–32 (TPILFQFLLSSLCVFLLFVFI). Residue C472 participates in heme binding.

The protein belongs to the cytochrome P450 family. It depends on heme as a cofactor.

The protein localises to the membrane. Its function is as follows. Probable heme-thiolate monooxygenase. The chain is Cytochrome P450 CYP749A22 from Panax ginseng (Korean ginseng).